Reading from the N-terminus, the 317-residue chain is Pantothenate kinase (317 aa).

99–106 is an ATP binding site; the sequence is GSVSVGKS.

The protein belongs to the prokaryotic pantothenate kinase family.

Its subcellular location is the cytoplasm. The catalysed reaction is (R)-pantothenate + ATP = (R)-4'-phosphopantothenate + ADP + H(+). It functions in the pathway cofactor biosynthesis; coenzyme A biosynthesis; CoA from (R)-pantothenate: step 1/5. The protein is Pantothenate kinase of Mannheimia succiniciproducens (strain KCTC 0769BP / MBEL55E).